A 137-amino-acid chain; its full sequence is Large-conductance mechanosensitive channel (137 aa).

Transmembrane regions (helical) follow at residues 9–29 (AFAV…GAAF) and 79–99 (IQTV…VKAI).

The protein belongs to the MscL family. Homopentamer.

The protein resides in the cell inner membrane. Its function is as follows. Channel that opens in response to stretch forces in the membrane lipid bilayer. May participate in the regulation of osmotic pressure changes within the cell. The polypeptide is Large-conductance mechanosensitive channel (Pseudomonas aeruginosa (strain ATCC 15692 / DSM 22644 / CIP 104116 / JCM 14847 / LMG 12228 / 1C / PRS 101 / PAO1)).